A 239-amino-acid chain; its full sequence is Putative transcriptional regulator of 2-aminoethylphosphonate degradation operons (239 aa).

The HTH gntR-type domain maps to 8–76 (IPQYLLIKAQ…DRRGWFVTPE (69 aa)). A DNA-binding region (H-T-H motif) is located at residues 36 to 55 (ERELCAIFNTTRITIRESLA).

In Salmonella typhi, this protein is Putative transcriptional regulator of 2-aminoethylphosphonate degradation operons (phnR).